The chain runs to 1133 residues: Protein TOPLESS-RELATED PROTEIN 2 (1133 aa).

One can recognise a LisH domain in the interval 4-36 (LSRELVFLILQFLDEEKFKETVHKLEQESAFYF). A CTLH domain is found at 34 to 92 (FYFNMKHFEDLVQGGEWDEVEKYLSGFTKVEDNRYSMKIFFEIRKQKYLEALDRHDRAK). WD repeat units follow at residues 344–384 (NQGS…RIAH), 451–492 (AHIG…KQYT), 495–536 (GHEA…SRVD), 539–582 (APGH…IKRT), 586–625 (FRKR…ILTT), 630–669 (GGLP…RLLR), 771–810 (ATSS…RNPN), 838–876 (NPEE…VMTT), 879–919 (APPP…VKSK), 922–961 (GHSK…KKKS), 970–1011 (RSGA…RSWS), and 1015–1054 (ALPA…LRCR). The tract at residues 1102–1133 (DSDPKWGVAPPQDNGTHPTISAAPAAANKPEV) is disordered.

Tetramer. Interacts with D53, probably via the EAR motifs. Binds to AP2-1/TOE1, AP2-3/SNB and AP2-2/IDS1. Interacts with WOX1. Interacts with MOF1. Expressed in stems and panicles. Detected in roots, seeds, leaves and sheath. Expressed in the meristem and lateral organ primordia.

The protein localises to the nucleus. Its function is as follows. Transcriptional corepressor involved in branch formation regulation, presumably by suppressing primary branch formation and promoting secondary branch formation. Required for the cell elongation in the first internode and pollen development. Probable downstream regulator of strigolactones signaling important in axillary meristem maintenance. Acts in auxin signaling and is associated with the regulation of histone deacetylation. Essential for the function of miR172 microRNA and its target genes in regulating panicle development. The chain is Protein TOPLESS-RELATED PROTEIN 2 from Oryza sativa subsp. japonica (Rice).